A 193-amino-acid chain; its full sequence is Acyl carrier protein phosphodiesterase (193 aa).

The protein belongs to the AcpH family.

It carries out the reaction holo-[ACP] + H2O = apo-[ACP] + (R)-4'-phosphopantetheine + H(+). Converts holo-ACP to apo-ACP by hydrolytic cleavage of the phosphopantetheine prosthetic group from ACP. In Salmonella choleraesuis (strain SC-B67), this protein is Acyl carrier protein phosphodiesterase.